A 1295-amino-acid polypeptide reads, in one-letter code: Phosphoribosylformylglycinamidine synthase (1295 aa).

Residues 302–327 (SPWPGASTGSGGEIRDEGATGRGAKP) form a disordered region. ATP-binding positions include 306 to 317 (GASTGSGGEIRD) and A677. Residues D678, E717, N721, and D884 each coordinate Mg(2+). S886 contributes to the ATP binding site. In terms of domain architecture, Glutamine amidotransferase type-1 spans 1042-1295 (VAVLREQGVN…IFRNARKQLG (254 aa)). C1135 serves as the catalytic Nucleophile. Active-site residues include H1260 and E1262.

This sequence in the N-terminal section; belongs to the FGAMS family. In terms of assembly, monomer.

The protein resides in the cytoplasm. The catalysed reaction is N(2)-formyl-N(1)-(5-phospho-beta-D-ribosyl)glycinamide + L-glutamine + ATP + H2O = 2-formamido-N(1)-(5-O-phospho-beta-D-ribosyl)acetamidine + L-glutamate + ADP + phosphate + H(+). It participates in purine metabolism; IMP biosynthesis via de novo pathway; 5-amino-1-(5-phospho-D-ribosyl)imidazole from N(2)-formyl-N(1)-(5-phospho-D-ribosyl)glycinamide: step 1/2. Functionally, phosphoribosylformylglycinamidine synthase involved in the purines biosynthetic pathway. Catalyzes the ATP-dependent conversion of formylglycinamide ribonucleotide (FGAR) and glutamine to yield formylglycinamidine ribonucleotide (FGAM) and glutamate. The chain is Phosphoribosylformylglycinamidine synthase from Photorhabdus laumondii subsp. laumondii (strain DSM 15139 / CIP 105565 / TT01) (Photorhabdus luminescens subsp. laumondii).